The primary structure comprises 139 residues: Small ribosomal subunit protein uS12 (139 aa).

Aspartate 102 bears the 3-methylthioaspartic acid mark.

This sequence belongs to the universal ribosomal protein uS12 family. Part of the 30S ribosomal subunit. Contacts proteins S8 and S17. May interact with IF1 in the 30S initiation complex.

In terms of biological role, with S4 and S5 plays an important role in translational accuracy. Functionally, interacts with and stabilizes bases of the 16S rRNA that are involved in tRNA selection in the A site and with the mRNA backbone. Located at the interface of the 30S and 50S subunits, it traverses the body of the 30S subunit contacting proteins on the other side and probably holding the rRNA structure together. The combined cluster of proteins S8, S12 and S17 appears to hold together the shoulder and platform of the 30S subunit. In Bacillus pumilus (strain SAFR-032), this protein is Small ribosomal subunit protein uS12.